Reading from the N-terminus, the 659-residue chain is Enzymatic polyprotein (659 aa).

Residues 1-180 (MSLRNRTNPN…FLEEGGNHVD (180 aa)) form a protease region. D34 is a catalytic residue. The Reverse transcriptase domain occupies 252-436 (LELKVIKPSK…EKINFLGLEI (185 aa)).

This sequence belongs to the caulimoviridae enzymatic polyprotein family.

It catalyses the reaction DNA(n) + a 2'-deoxyribonucleoside 5'-triphosphate = DNA(n+1) + diphosphate. In terms of biological role, encodes for at least two polypeptides: protease (PR) and reverse transcriptase (RT). The protease processes the polyprotein in cis. Reverse transcriptase is multifunctional enzyme that converts the viral RNA genome into dsDNA in viral cytoplasmic capsids. This enzyme displays a DNA polymerase activity that can copy either DNA or RNA templates, and a ribonuclease H (RNase H) activity that cleaves the RNA strand of RNA-DNA heteroduplexes in a partially processive 3'- to 5'-endonucleasic mode. Neo-synthesized pregenomic RNA (pgRNA) are encapsidated, and reverse-transcribed inside the nucleocapsid. Partial (+)DNA is synthesized from the (-)DNA template and generates the relaxed circular DNA (RC-DNA) genome. After budding and infection, the RC-DNA migrates in the nucleus, and is converted into a plasmid-like covalently closed circular DNA (cccDNA). The sequence is that of Enzymatic polyprotein from Dianthus caryophyllus (Carnation).